Consider the following 1068-residue polypeptide: Target of Nesh-SH3 (1068 aa).

The N-terminal stretch at 1 to 21 (MLSSLGCLLLCGSITLALGNA) is a signal peptide. An N-linked (GlcNAc...) asparagine glycan is attached at Asn37. Positions 116 to 214 (KPLQLVVGTL…KIFNHKTVVG (99 aa)) constitute a Fibronectin type-III 1 domain. Disordered regions lie at residues 315 to 351 (SKTP…DVSE) and 384 to 811 (VFSS…SITD). Residues 326–339 (RPTTVTPETVPRST) are compositionally biased toward low complexity. Positions 340-351 (KPTTSSALDVSE) are enriched in polar residues. Over residues 447 to 462 (QPTTPAPQQTTSIPST) the composition is skewed to low complexity. Positions 463–473 (PKRRPRPKPPR) are enriched in basic residues. Residues 482–499 (AGTITPKISKSPEPTWTT) are compositionally biased toward polar residues. Pro residues predominate over residues 532–544 (RAPPKPKTSPRPR). Residues 562-574 (PKTSPSPEVSYTT) show a composition bias toward polar residues. 2 stretches are compositionally biased toward low complexity: residues 603-631 (IPFI…STQE) and 737-750 (PPLR…GTPL). A compositionally biased stretch (polar residues) spans 802–811 (PDNSPCSITD). Positions 833 to 926 (PPTNLTVVTV…NTVAFSTESA (94 aa)) constitute a Fibronectin type-III 2 domain.

Probably interacts with ABI3. In terms of tissue distribution, expressed in brain, heart, lung, liver, pancreas kidney and placenta.

It is found in the secreted. This chain is Target of Nesh-SH3, found in Homo sapiens (Human).